Consider the following 507-residue polypeptide: Sensor protein CseC (507 aa).

The tract at residues 1–42 (MRGFFRQRRSVSPPGHPYDRTGPGEHAGPGARTGPGGRPRVL) is disordered. The segment covering 25–37 (EHAGPGARTGPGG) has biased composition (gly residues). 2 helical membrane passes run 60-80 (LSAA…LVVH) and 183-203 (ALVI…VLIG). The HAMP domain maps to 204-260 (GQLSRRLREAAAAANRVASGEPDVRVRDAIGGVVRDETDDVARAVDAMADALQQRIE). The region spanning 268–470 (DIAHELRTPV…VAVLWLPEHA (203 aa)) is the Histidine kinase domain. Residue His271 is modified to Phosphohistidine; by autocatalysis. The interval 472–507 (TNTGSYPMLPDRSKSGASSSARDMSREASQGMSRKP) is disordered. A compositionally biased stretch (polar residues) spans 486-507 (SGASSSARDMSREASQGMSRKP).

It is found in the cell membrane. It carries out the reaction ATP + protein L-histidine = ADP + protein N-phospho-L-histidine.. Member of the two-component regulatory system CseB/CseC involved in the stability of the cell envelope, through activation of transcription of RNA polymerase sigma-E factor. CseC functions as a membrane-associated protein kinase that phosphorylates CseB in response to changes in the cell envelope. This Streptomyces coelicolor (strain ATCC BAA-471 / A3(2) / M145) protein is Sensor protein CseC (cseC).